The following is a 396-amino-acid chain: Purine ribonucleoside efflux pump NepI (396 aa).

At 1-21 (MSEFIAENRGADAITRPNWSA) the chain is on the cytoplasmic side. A helical membrane pass occupies residues 22 to 42 (VFSVAFCVACLIIVEFLPVSL). Residues 43-54 (LTPMAQDLGISE) lie on the Periplasmic side of the membrane. Residues 55–75 (GVAGQSVTVTAFVAMFASLFI) traverse the membrane as a helical segment. Over 76 to 85 (TQTIQATDRR) the chain is Cytoplasmic. Residues 86–106 (YVVILFAVLLTLSCLLVSFAN) form a helical membrane-spanning segment. A topological domain (periplasmic) is located at residue S107. Residues 108-128 (FSLLLIGRACLGLALGGFWAM) traverse the membrane as a helical segment. At 129-147 (SASLTMRLVPPRTVPKALS) the chain is on the cytoplasmic side. The helical transmembrane segment at 148–168 (VIFGAVSIALVIAAPLGSFLG) threads the bilayer. The Periplasmic portion of the chain corresponds to 169–175 (ELIGWRN). A helical membrane pass occupies residues 176 to 196 (VFNAAAVMGVLCIFWIIKSLP). Residues 197–215 (SLPGEPSHQKQNTFRLLQR) lie on the Cytoplasmic side of the membrane. Residues 216–236 (PGVMAGMIAIFMSFAGQFAFF) traverse the membrane as a helical segment. Residues 237–255 (TYIRPVYMNLAGFGVDGLT) lie on the Periplasmic side of the membrane. The chain crosses the membrane as a helical span at residues 256–276 (LVLLSFGIASFIGTSLSSFIL). Residues 277-281 (KRSVK) are Cytoplasmic-facing. Residues 282–302 (LALAGAPLILAVSALVLTLWG) form a helical membrane-spanning segment. At 303–305 (SDK) the chain is on the periplasmic side. A helical transmembrane segment spans residues 306 to 326 (IVATGVAIIWGLTFALVPVGW). The Cytoplasmic portion of the chain corresponds to 327-343 (STWITRSLADQAEKAGS). The helical transmembrane segment at 344–364 (IQVAVIQLANTCGAAIGGYAL) threads the bilayer. Residues 365 to 366 (DN) are Periplasmic-facing. Residues 367 to 387 (IGLTSPLMLSGTLMLLTALLV) traverse the membrane as a helical segment. The Cytoplasmic portion of the chain corresponds to 388–396 (TAKVKMKKS).

Belongs to the major facilitator superfamily. DHA1 family. NepI (TC 2.A.1.2.26) subfamily.

It localises to the cell inner membrane. It catalyses the reaction inosine(in) + H(+)(out) = inosine(out) + H(+)(in). The catalysed reaction is guanosine(in) + H(+)(out) = guanosine(out) + H(+)(in). Involved in the efflux of purine ribonucleosides, such as inosine and guanosine. The polypeptide is Purine ribonucleoside efflux pump NepI (Shigella flexneri).